Here is a 374-residue protein sequence, read N- to C-terminus: MDTSSFETDLSLFKYDDLEALPDEYRELTPTARTERIEAARAELGDDVVVLGHNYQRREIVEHADFVGDSYQLSKEAANADADYVIFGGVTFMAESADIITDDSQSVILPSMEASCPMAGMAEALQVDAAWADITAAAPDETIIPITYMNSYADLKAFCAEQGGLVCTSSNAHRAFEWAFERGDKVLFLPDKHLGENTAHRLGMADATVEWDPWAAEGKTAEEVADADIVLWDGYCQVHERFTPEHVAEVRADHEDANVVVHPECRREVVEAADVVGSTATITETVADADPGETWAIGTEIHLANHLQRWHPEVNVVPLCGDACMDCNAMRQIDPNYLAWVLEELVEGRERNVIEVDSEEAELAQVGLDRMLEL.

Iminosuccinate-binding residues include histidine 53 and serine 70. Cysteine 116 is a binding site for [4Fe-4S] cluster. Iminosuccinate is bound by residues 148-150 (YMN) and serine 169. Position 236 (cysteine 236) interacts with [4Fe-4S] cluster. Residues 262–264 (HPE) and threonine 279 each bind iminosuccinate. Cysteine 327 contributes to the [4Fe-4S] cluster binding site.

This sequence belongs to the quinolinate synthase family. Type 3 subfamily. It depends on [4Fe-4S] cluster as a cofactor.

It is found in the cytoplasm. The enzyme catalyses iminosuccinate + dihydroxyacetone phosphate = quinolinate + phosphate + 2 H2O + H(+). It participates in cofactor biosynthesis; NAD(+) biosynthesis; quinolinate from iminoaspartate: step 1/1. Catalyzes the condensation of iminoaspartate with dihydroxyacetone phosphate to form quinolinate. In Halobacterium salinarum (strain ATCC 29341 / DSM 671 / R1), this protein is Quinolinate synthase.